Consider the following 1018-residue polypeptide: Serine/threonine-protein kinase 31 (1018 aa).

In terms of domain architecture, Tudor spans 78-137 (NLDPKKIYGGLFSEDKCWYRCKVLKTISDDKCLVRYIDYGNTEILNRSDIVEIPPELQFS). The stretch at 298–358 (AKIKQDQKLI…TKHLESTLKT (61 aa)) forms a coiled coil. The Protein kinase domain occupies 711-1018 (IGLLKYMNSG…EKTRNGEANP (308 aa)). Residues 717-725 (MNSGGLLTM) and Lys738 contribute to the ATP site. Residues 988 to 1018 (IECTQHSREDESKMESLDRYSEKTRNGEANP) form a disordered region.

This sequence belongs to the protein kinase superfamily. Ser/Thr protein kinase family. In terms of tissue distribution, testis specific. Expressed only in male germ cells.

The catalysed reaction is L-seryl-[protein] + ATP = O-phospho-L-seryl-[protein] + ADP + H(+). The enzyme catalyses L-threonyl-[protein] + ATP = O-phospho-L-threonyl-[protein] + ADP + H(+). The protein is Serine/threonine-protein kinase 31 (Stk31) of Mus musculus (Mouse).